The chain runs to 278 residues: Envelope glycoprotein L (278 aa).

The signal sequence occupies residues 1–30 (MCRRPDCGFSFSPGPVILLWCCLLLPIVSS). One can recognise a gL betaherpesvirus-type domain in the interval 43-256 (VPAECPELTR…DKYYAGLPPE (214 aa)). C154 and C159 are disulfide-bonded.

This sequence belongs to the herpesviridae glycoprotein L (gL) family. Betaherpesvirinae gL subfamily. As to quaternary structure, interacts with glycoprotein H (gH); this interaction is necessary for the correct processing and cell surface expression of gH. Forms the envelope pentamer complex (PC) composed of gH, gL, UL128, UL130, and UL131A. The pentamer interacts with host NRP2. Forms the envelope trimer complex composed of gH, gL, and gO. The trimer interacts with host PDGFRA. The trimer also interacts with host EPHA2.

Its subcellular location is the virion membrane. The protein resides in the host cell membrane. The protein localises to the host Golgi apparatus. It is found in the host trans-Golgi network. Functionally, the heterodimer glycoprotein H-glycoprotein L is required for the fusion of viral and plasma membranes leading to virus entry into the host cell. Acts as a functional inhibitor of gH and maintains gH in an inhibited form. Upon binding to host integrins, gL dissociates from gH leading to activation of the viral fusion glycoproteins gB and gH. In human cytomegalovirus, forms two distincts complexes to mediate viral entry, a trimer and a pentamer at the surface of the virion envelope. The gH-gL-gO trimer is required for infection in fibroblasts by interacting with host PDGFRA, and in glioblastoma cells by interacting with host EPHA2. The gH-gL-UL128-UL130-UL131A pentamer is essential for viral entry in epithelial, endothelial and myeloid cells via interaction with host NRP2. This Homo sapiens (Human) protein is Envelope glycoprotein L.